The primary structure comprises 415 residues: Multidrug resistance protein MdtA (415 aa).

Residues 1-21 (MKGSYKSRWVIVIVVVIAAIA) form the signal peptide. A compositionally biased stretch (polar residues) spans 31–46 (DSQSAAPGATKQAQQS). 2 disordered regions span residues 31 to 56 (DSQS…GMRA) and 391 to 415 (VEAQ…GARS). Positions 399–415 (PEEKATSREYAKKGARS) are enriched in basic and acidic residues.

The protein belongs to the membrane fusion protein (MFP) (TC 8.A.1) family. As to quaternary structure, part of a tripartite efflux system composed of MdtA, MdtB and MdtC.

It localises to the cell inner membrane. The MdtABC tripartite complex confers resistance against novobiocin and deoxycholate. The polypeptide is Multidrug resistance protein MdtA (Escherichia coli O45:K1 (strain S88 / ExPEC)).